An 86-amino-acid polypeptide reads, in one-letter code: Progonadoliberin-2 (86 aa).

Residues Met1–Ser24 form the signal peptide. A Pyrrolidone carboxylic acid modification is found at Gln25. Gly34 carries the glycine amide modification.

Belongs to the GnRH family.

The protein resides in the secreted. In terms of biological role, stimulates the secretion of gonadotropins. This chain is Progonadoliberin-2 (gnrh2), found in Oncorhynchus mykiss (Rainbow trout).